The sequence spans 148 residues: Deoxyuridine 5'-triphosphate nucleotidohydrolase (148 aa).

Residues Arg-67–Gly-69, Asn-80, Leu-84–Asp-86, and Met-94 each bind substrate.

Belongs to the dUTPase family. It depends on Mg(2+) as a cofactor.

The catalysed reaction is dUTP + H2O = dUMP + diphosphate + H(+). It participates in pyrimidine metabolism; dUMP biosynthesis; dUMP from dCTP (dUTP route): step 2/2. In terms of biological role, this enzyme is involved in nucleotide metabolism: it produces dUMP, the immediate precursor of thymidine nucleotides and it decreases the intracellular concentration of dUTP so that uracil cannot be incorporated into DNA. The protein is Deoxyuridine 5'-triphosphate nucleotidohydrolase of Francisella tularensis subsp. tularensis (strain FSC 198).